The sequence spans 923 residues: Probable dipeptidyl-aminopeptidase B (923 aa).

The span at 1–16 (MATEKGHGRDDEERVP) shows a compositional bias: basic and acidic residues. The segment at 1 to 21 (MATEKGHGRDDEERVPLTRGS) is disordered. At 1–99 (MATEKGHGRD…KPMHKSVKIA (99 aa)) the chain is on the cytoplasmic side. A helical; Signal-anchor for type II membrane protein transmembrane segment spans residues 100–120 (LWTLLFLSLGGWSLAFVLFIF). At 121–923 (RSHDTYETPI…GLSYNFKHLH (803 aa)) the chain is on the vacuolar side. 3 N-linked (GlcNAc...) asparagine glycosylation sites follow: Asn135, Asn351, and Asn574. Ser756 serves as the catalytic Charge relay system. N-linked (GlcNAc...) asparagine glycosylation occurs at Asn815. Residues Asp833 and His866 each act as charge relay system in the active site. N-linked (GlcNAc...) asparagine glycosylation is present at Asn902.

It belongs to the peptidase S9B family.

The protein localises to the vacuole membrane. It catalyses the reaction Release of an N-terminal dipeptide, Xaa-Yaa-|-Zaa-, from a polypeptide, preferentially when Yaa is Pro, provided Zaa is neither Pro nor hydroxyproline.. In terms of biological role, type IV dipeptidyl-peptidase which removes N-terminal dipeptides sequentially from polypeptides having unsubstituted N-termini provided that the penultimate residue is proline. This is Probable dipeptidyl-aminopeptidase B (DAPB) from Ajellomyces capsulatus (strain G186AR / H82 / ATCC MYA-2454 / RMSCC 2432) (Darling's disease fungus).